A 25-amino-acid chain; its full sequence is Bioremediase (25 aa).

The 25-residue stretch at 1-25 (DFPIANGERQSPVDIDTKAVVQDPA) folds into the Alpha-carbonic anhydrase domain. Residues 1–25 (DFPIANGERQSPVDIDTKAVVQDPA) form a disordered region.

Belongs to the alpha-carbonic anhydrase family. It depends on Zn(2+) as a cofactor.

In terms of biological role, releases silica from silica-rich substances. The chain is Bioremediase from Thermoanaerobacter sp.